The sequence spans 142 residues: Succinate dehydrogenase subunit 6, mitochondrial (142 aa).

As to quaternary structure, component of complex II composed of eight subunits in plants: four classical SDH subunits SDH1, SDH2, SDH3 and SDH4 (a flavoprotein (FP), an iron-sulfur protein (IP), and a cytochrome b composed of a large and a small subunit.), as well as four subunits unknown in mitochondria from bacteria and heterotrophic eukaryotes.

The protein resides in the mitochondrion inner membrane. The protein operates within carbohydrate metabolism; tricarboxylic acid cycle. This is Succinate dehydrogenase subunit 6, mitochondrial from Oryza sativa subsp. japonica (Rice).